Consider the following 65-residue polypeptide: Metallothionein-like protein 3B (65 aa).

Belongs to the metallothionein superfamily. Type 15 family. Expressed in leaves and rachis.

Its function is as follows. Metallothioneins have a high content of cysteine residues that bind various heavy metals. This chain is Metallothionein-like protein 3B (MT3B), found in Oryza sativa subsp. japonica (Rice).